The following is a 233-amino-acid chain: Aspartate/glutamate leucyltransferase (233 aa).

This sequence belongs to the R-transferase family. Bpt subfamily.

It is found in the cytoplasm. The catalysed reaction is N-terminal L-glutamyl-[protein] + L-leucyl-tRNA(Leu) = N-terminal L-leucyl-L-glutamyl-[protein] + tRNA(Leu) + H(+). It carries out the reaction N-terminal L-aspartyl-[protein] + L-leucyl-tRNA(Leu) = N-terminal L-leucyl-L-aspartyl-[protein] + tRNA(Leu) + H(+). Functionally, functions in the N-end rule pathway of protein degradation where it conjugates Leu from its aminoacyl-tRNA to the N-termini of proteins containing an N-terminal aspartate or glutamate. The sequence is that of Aspartate/glutamate leucyltransferase from Vibrio parahaemolyticus serotype O3:K6 (strain RIMD 2210633).